The following is a 372-amino-acid chain: uncharacterized protein (372 aa).

A disordered region spans residues 49–72; the sequence is FSHKGGGKGGGSGAGSNDGGCSGE. The span at 55–70 shows a compositional bias: gly residues; the sequence is GKGGGSGAGSNDGGCS.

This is an uncharacterized protein from Halorubrum lacusprofundi (strain ATCC 49239 / DSM 5036 / JCM 8891 / ACAM 34).